The sequence spans 414 residues: Glutamyl-tRNA reductase (414 aa).

Substrate is bound by residues Thr49–Arg52, Ser108, Glu113–Gln115, and Gln119. Cys50 serves as the catalytic Nucleophile. An NADP(+)-binding site is contributed by Gly188–Gly193.

Belongs to the glutamyl-tRNA reductase family. Homodimer.

The catalysed reaction is (S)-4-amino-5-oxopentanoate + tRNA(Glu) + NADP(+) = L-glutamyl-tRNA(Glu) + NADPH + H(+). Its pathway is porphyrin-containing compound metabolism; protoporphyrin-IX biosynthesis; 5-aminolevulinate from L-glutamyl-tRNA(Glu): step 1/2. Catalyzes the NADPH-dependent reduction of glutamyl-tRNA(Glu) to glutamate 1-semialdehyde (GSA). This chain is Glutamyl-tRNA reductase, found in Francisella tularensis subsp. holarctica (strain FTNF002-00 / FTA).